The following is a 421-amino-acid chain: E3 ubiquitin-protein ligase MARCHF4 (421 aa).

Positions 1–16 (MLLAIGVIVWCWGLLS) are cleaved as a signal peptide. A disordered region spans residues 60–79 (ELNAEGNATSSATESHSLAN). A compositionally biased stretch (polar residues) spans 65–77 (GNATSSATESHSL). The RING-CH-type zinc-finger motif lies at 135–195 (DSGVRTPLCR…ELCYYKYQVI (61 aa)). 8 residues coordinate Zn(2+): cysteine 143, cysteine 146, cysteine 159, cysteine 161, histidine 169, cysteine 172, cysteine 185, and cysteine 188. 2 helical membrane-spanning segments follow: residues 218–238 (IAAA…LVWS) and 252–272 (LFQI…ALIV). Disordered regions lie at residues 319 to 385 (PLTH…LPDH) and 401 to 421 (QEPR…VTTV). 2 stretches are compositionally biased toward polar residues: residues 367–380 (TEPQ…NGQP) and 403–412 (PRGQTSNSNR).

The protein resides in the golgi apparatus membrane. It catalyses the reaction S-ubiquitinyl-[E2 ubiquitin-conjugating enzyme]-L-cysteine + [acceptor protein]-L-lysine = [E2 ubiquitin-conjugating enzyme]-L-cysteine + N(6)-ubiquitinyl-[acceptor protein]-L-lysine.. It participates in protein modification; protein ubiquitination. Functionally, E3 ubiquitin-protein ligase. E3 ubiquitin ligases accept ubiquitin from an E2 ubiquitin-conjugating enzyme in the form of a thioester and then directly transfer the ubiquitin to targeted substrates. In Danio rerio (Zebrafish), this protein is E3 ubiquitin-protein ligase MARCHF4 (marchf4).